A 907-amino-acid polypeptide reads, in one-letter code: Translation initiation factor IF-2 (907 aa).

The disordered stretch occupies residues 26–317 (DAGMKKSSSD…KPKSMQHGFD (292 aa)). Composition is skewed to basic and acidic residues over residues 28–44 (GMKK…EKQK) and 101–248 (SAIE…DTDY). Over residues 299-308 (KGGRKGKLSK) the composition is skewed to basic residues. The tr-type G domain maps to 406-575 (PRAPVVTIMG…LLQAEVLELT (170 aa)). The tract at residues 415-422 (GHVDHGKT) is G1. 415–422 (GHVDHGKT) provides a ligand contact to GTP. Residues 440-444 (GITQH) are G2. Residues 461 to 464 (DTPG) form a G3 region. GTP-binding positions include 461–465 (DTPGH) and 515–518 (NKID). Residues 515 to 518 (NKID) form a G4 region. Residues 551–553 (SAK) form a G5 region.

This sequence belongs to the TRAFAC class translation factor GTPase superfamily. Classic translation factor GTPase family. IF-2 subfamily.

The protein resides in the cytoplasm. In terms of biological role, one of the essential components for the initiation of protein synthesis. Protects formylmethionyl-tRNA from spontaneous hydrolysis and promotes its binding to the 30S ribosomal subunits. Also involved in the hydrolysis of GTP during the formation of the 70S ribosomal complex. This Vibrio vulnificus (strain YJ016) protein is Translation initiation factor IF-2.